The following is a 400-amino-acid chain: Large envelope protein (400 aa).

Residue G2 is the site of N-myristoyl glycine; by host attachment. The pre-S1 stretch occupies residues 2 to 119; the sequence is GGWLPKPRKG…PPLRDSHPQA (118 aa). Residues 2–174 are pre-S; sequence GGWLPKPRKG…SSRTGDPAPT (173 aa). Over 2 to 181 the chain is Virion surface; in external conformation; sequence GGWLPKPRKG…APTMENITSG (180 aa). Over 2-253 the chain is Intravirion; in internal conformation; sequence GGWLPKPRKG…PGYRWMCLRR (252 aa). The segment at 84 to 115 is disordered; that stretch reads TLTTVPAVPPPASANRQSGRQPTPISPPLRDS. Residues 97-106 are compositionally biased toward polar residues; that stretch reads ANRQSGRQPT. Residues 120–174 are pre-S2; the sequence is IKWNSPAFHQALQDPRVKGLYFPAGGSSSGTVSPVPNIASHISSISSRTGDPAPT. A helical transmembrane segment spans residues 182 to 202; it reads FLGPLLVLQAGFFLLTRILTI. At 203 to 253 the chain is on the intravirion; in external conformation side; the sequence is PQSLDSWWTSLNFLGGSPVCLGQNSQSPTSNHSPTSCPPICPGYRWMCLRR. The helical transmembrane segment at 254-274 threads the bilayer; it reads FIIFLFILLLCLIFLLVLLDY. At 275-348 the chain is on the virion surface side; the sequence is QGMLPVCPLI…WASVRFSWLS (74 aa). N320 carries N-linked (GlcNAc...) asparagine; by host glycosylation. The chain crosses the membrane as a helical span at residues 349–369; that stretch reads LLVPFVQWFVGLSPTVWLSVI. Residues 370-375 lie on the Intravirion side of the membrane; it reads WMMWYW. A helical membrane pass occupies residues 376 to 398; the sequence is GPRLYNILSPFIPLLPIFFCLWV. At 399-400 the chain is on the virion surface side; it reads YI.

Belongs to the orthohepadnavirus major surface antigen family. As to quaternary structure, li-HBsAg interacts with capsid protein and with HDV Large delta antigen. Isoform M associates with host chaperone CANX through its pre-S2 N glycan. This association may be essential for M proper secretion. In terms of processing, isoform M is N-terminally acetylated by host at a ratio of 90%, and N-glycosylated by host at the pre-S2 region. Myristoylated.

The protein resides in the virion membrane. The large envelope protein exists in two topological conformations, one which is termed 'external' or Le-HBsAg and the other 'internal' or Li-HBsAg. In its external conformation the protein attaches the virus to cell receptors and thereby initiating infection. This interaction determines the species specificity and liver tropism. This attachment induces virion internalization predominantly through caveolin-mediated endocytosis. The large envelope protein also assures fusion between virion membrane and endosomal membrane. In its internal conformation the protein plays a role in virion morphogenesis and mediates the contact with the nucleocapsid like a matrix protein. Functionally, the middle envelope protein plays an important role in the budding of the virion. It is involved in the induction of budding in a nucleocapsid independent way. In this process the majority of envelope proteins bud to form subviral lipoprotein particles of 22 nm of diameter that do not contain a nucleocapsid. The sequence is that of Large envelope protein from Hepatitis B virus genotype A3 (isolate Cameroon/CMR983/1994) (HBV-A).